Reading from the N-terminus, the 280-residue chain is Protein MGF 505-3R (280 aa).

Belongs to the asfivirus MGF 505 family.

Functionally, plays a role in virus cell tropism, and may be required for efficient virus replication in macrophages. The protein is Protein MGF 505-3R of African swine fever virus (strain Badajoz 1971 Vero-adapted) (Ba71V).